The sequence spans 249 residues: Tegument protein UL51 homolog (249 aa).

Belongs to the herpesviridae UL51 family. As to quaternary structure, oligomerizes. Interacts with MDV019; this interaction mediates MDV019 incorporation to virions. Phosphorylated.

The protein resides in the virion tegument. The protein localises to the host cytoplasm. Its subcellular location is the host Golgi apparatus. Functionally, plays several roles during the time course of infection, including egress of virus particles from the perinuclear space and secondary envelopment of cytoplasmic capsids that bud into specific trans-Golgi network (TGN)-derived membranes. The chain is Tegument protein UL51 homolog (MDV065) from Gallus gallus (Chicken).